The following is a 63-amino-acid chain: Conotoxin Vi5.1b (63 aa).

Residues 1 to 22 (MLCVPVFIILFIIIPFAPTSES) form the signal peptide. Residues 23-50 (QPKTKEEVAKASVHDNAERTLQRLWNQS) constitute a propeptide that is removed on maturation. Residue Pro62 is modified to Proline amide.

Belongs to the conotoxin T superfamily. Post-translationally, contains 2 disulfide bonds that can be either 'C1-C3, C2-C4' or 'C1-C4, C2-C3', since these disulfide connectivities have been observed for conotoxins with cysteine framework V (for examples, see AC P0DQQ7 and AC P81755). Expressed by the venom duct.

The protein resides in the secreted. The protein is Conotoxin Vi5.1b of Conus virgo (Virgin cone).